A 516-amino-acid polypeptide reads, in one-letter code: Bifunctional pantoate ligase/cytidylate kinase (516 aa).

The segment at 1 to 279 (MVRKIFQTNA…CGSTRLIDHT (279 aa)) is pantoate--beta-alanine ligase. Position 29 to 36 (29 to 36 (MGGLHPGH)) interacts with ATP. His36 acts as the Proton donor in catalysis. Gln64 contacts (R)-pantoate. Gln64 contacts beta-alanine. Position 153 to 156 (153 to 156 (GEKD)) interacts with ATP. Gln159 is a binding site for (R)-pantoate. Residue 190-193 (YSSR) coordinates ATP. The tract at residues 280 to 516 (FLMHRKPIIA…PEEVWPTPNS (237 aa)) is cytidylate kinase.

In the N-terminal section; belongs to the pantothenate synthetase family. The protein in the C-terminal section; belongs to the cytidylate kinase family. Type 1 subfamily.

The protein resides in the cytoplasm. It carries out the reaction (R)-pantoate + beta-alanine + ATP = (R)-pantothenate + AMP + diphosphate + H(+). The catalysed reaction is CMP + ATP = CDP + ADP. It catalyses the reaction dCMP + ATP = dCDP + ADP. Its pathway is cofactor biosynthesis; (R)-pantothenate biosynthesis; (R)-pantothenate from (R)-pantoate and beta-alanine: step 1/1. Its function is as follows. Catalyzes the condensation of pantoate with beta-alanine in an ATP-dependent reaction via a pantoyl-adenylate intermediate. Functionally, catalyzes the transfer of a phosphate group from ATP to either CMP or dCMP to form CDP or dCDP and ADP, respectively. The chain is Bifunctional pantoate ligase/cytidylate kinase from Prochlorococcus marinus (strain NATL2A).